Consider the following 551-residue polypeptide: Scaffold protein D13 ortholog (551 aa).

It belongs to the poxviridae protein D13 family. Homotrimer. Self-assembles to form a layer. Interacts with A17 (via N-terminus); this interaction is necessary for D13 association with membranes.

It localises to the membrane. Its function is as follows. Scaffold protein which forms a transitory spherical honeycomb lattice providing curvature and rigidity to the convex membrane of crescent and immature virions (IV). This association occurs concomitantly with viral membrane formation. Targeted by the drug rifampicin, which prevents the formation of this lattice, and hence virus morphogenesis. In the presence of rifampicin, irregularly shaped membranes that lack the honeycomb layer accumulate around areas of electron-dense viroplasm. This layer is lost from virions during maturation from IV to mature virion (MV), through the proteolysis of A17 N-terminus. In Sus scrofa (Pig), this protein is Scaffold protein D13 ortholog.